A 100-amino-acid polypeptide reads, in one-letter code: ATP synthase subunit c (100 aa).

The next 2 helical transmembrane spans lie at 26–46 (FSVV…AIGM) and 71–91 (MFIA…IALI).

It belongs to the ATPase C chain family. As to quaternary structure, F-type ATPases have 2 components, F(1) - the catalytic core - and F(0) - the membrane proton channel. F(1) has five subunits: alpha(3), beta(3), gamma(1), delta(1), epsilon(1). F(0) has three main subunits: a(1), b(2) and c(10-14). The alpha and beta chains form an alternating ring which encloses part of the gamma chain. F(1) is attached to F(0) by a central stalk formed by the gamma and epsilon chains, while a peripheral stalk is formed by the delta and b chains.

The protein localises to the cell inner membrane. In terms of biological role, f(1)F(0) ATP synthase produces ATP from ADP in the presence of a proton or sodium gradient. F-type ATPases consist of two structural domains, F(1) containing the extramembraneous catalytic core and F(0) containing the membrane proton channel, linked together by a central stalk and a peripheral stalk. During catalysis, ATP synthesis in the catalytic domain of F(1) is coupled via a rotary mechanism of the central stalk subunits to proton translocation. Key component of the F(0) channel; it plays a direct role in translocation across the membrane. A homomeric c-ring of between 10-14 subunits forms the central stalk rotor element with the F(1) delta and epsilon subunits. This Campylobacter fetus subsp. fetus (strain 82-40) protein is ATP synthase subunit c.